The sequence spans 139 residues: Ribulose bisphosphate carboxylase small subunit (139 aa).

This sequence belongs to the RuBisCO small chain family. In terms of assembly, heterohexadecamer of 8 large and 8 small subunits.

The protein localises to the plastid. It is found in the chloroplast. Its function is as follows. RuBisCO catalyzes two reactions: the carboxylation of D-ribulose 1,5-bisphosphate, the primary event in carbon dioxide fixation, as well as the oxidative fragmentation of the pentose substrate in the photorespiration process. Both reactions occur simultaneously and in competition at the same active site. Although the small subunit is not catalytic it is essential for maximal activity. The chain is Ribulose bisphosphate carboxylase small subunit from Thalassiosira nordenskioeldii (Marine diatom).